The primary structure comprises 209 residues: Large ribosomal subunit protein uL3 (209 aa).

Residue Gln150 is modified to N5-methylglutamine.

The protein belongs to the universal ribosomal protein uL3 family. As to quaternary structure, part of the 50S ribosomal subunit. Forms a cluster with proteins L14 and L19. Methylated by PrmB.

In terms of biological role, one of the primary rRNA binding proteins, it binds directly near the 3'-end of the 23S rRNA, where it nucleates assembly of the 50S subunit. The chain is Large ribosomal subunit protein uL3 from Proteus mirabilis (strain HI4320).